Consider the following 174-residue polypeptide: Shikimate kinase 2 (174 aa).

Residue 12-17 (GCGKTT) coordinates ATP. Mg(2+)-binding residues include Thr16 and Asp32. Positions 34, 58, and 79 each coordinate substrate. Residues 112 to 126 (QAAPEEDLRPTLTGK) are LID domain. Position 120 (Arg120) interacts with ATP. Arg139 contacts substrate.

The protein belongs to the shikimate kinase family. AroL subfamily. As to quaternary structure, monomer. Mg(2+) serves as cofactor.

The protein resides in the cytoplasm. It carries out the reaction shikimate + ATP = 3-phosphoshikimate + ADP + H(+). It participates in metabolic intermediate biosynthesis; chorismate biosynthesis; chorismate from D-erythrose 4-phosphate and phosphoenolpyruvate: step 5/7. Its function is as follows. Catalyzes the specific phosphorylation of the 3-hydroxyl group of shikimic acid using ATP as a cosubstrate. The chain is Shikimate kinase 2 from Escherichia coli O1:K1 / APEC.